The chain runs to 143 residues: Large ribosomal subunit protein uL11 (143 aa).

It belongs to the universal ribosomal protein uL11 family. As to quaternary structure, part of the ribosomal stalk of the 50S ribosomal subunit. Interacts with L10 and the large rRNA to form the base of the stalk. L10 forms an elongated spine to which L12 dimers bind in a sequential fashion forming a multimeric L10(L12)X complex. Post-translationally, one or more lysine residues are methylated.

In terms of biological role, forms part of the ribosomal stalk which helps the ribosome interact with GTP-bound translation factors. This Rhizobium johnstonii (strain DSM 114642 / LMG 32736 / 3841) (Rhizobium leguminosarum bv. viciae) protein is Large ribosomal subunit protein uL11.